A 449-amino-acid chain; its full sequence is Protein tweety homolog 1 (449 aa).

Residues 1–43 (MSSSHGYRASWWTYILHQVPHTNFQFEVVDNQFAPQEWPYQQA) lie on the Extracellular side of the membrane. Residues 44-64 (LLFLASIAGLCLAISLILICV) traverse the membrane as a helical segment. At 65 to 86 (YLIRFCCCSSQEDDDSKSHRVC) the chain is on the cytoplasmic side. Residues 87–107 (CVTWSCVAAVIICCAGIGIGF) form a helical membrane-spanning segment. Topologically, residues 108 to 212 (YGNSETNDGV…QVNFIEDYRW (105 aa)) are extracellular. Asn128 carries an N-linked (GlcNAc...) asparagine glycan. A helical membrane pass occupies residues 213–233 (LAYILLLLLDLIICLFTLLGL). Topologically, residues 234–238 (AKQIK) are cytoplasmic. Residues 239-259 (WLVIVMTVVSFFVLLLSWGSM) traverse the membrane as a helical segment. Residues 260–388 (GLEMATAVGL…LKGLCYDGME (129 aa)) lie on the Extracellular side of the membrane. 2 cysteine pairs are disulfide-bonded: Cys273-Cys383 and Cys301-Cys368. Asn282 and Asn353 each carry an N-linked (GlcNAc...) asparagine glycan. The helical transmembrane segment at 389 to 409 (GILFLLLFSFLSALSFTAAIC) threads the bilayer. Residues 410 to 449 (SLPRAWKRFQNRDLDYDDMDEDDPFNPQESKRFVQWQSSI) are Cytoplasmic-facing.

The protein belongs to the tweety family. In terms of assembly, homotetramer; disulfide-linked. Homodimer.

The protein resides in the cell membrane. The enzyme catalyses chloride(in) = chloride(out). The catalysed reaction is L-glutamate(out) = L-glutamate(in). In terms of biological role, may act as a calcium-independent, swelling-dependent volume-regulated anion channel (VRAC-swell) which plays a pivotal role in the process of regulatory volume decrease (RVD) in the brain through the efflux of anions like chloride and organic osmolytes like glutamate. The sequence is that of Protein tweety homolog 1 (ttyh1) from Xenopus tropicalis (Western clawed frog).